Reading from the N-terminus, the 453-residue chain is UDP-N-acetylmuramoylalanine--D-glutamate ligase (453 aa).

Residue G115–T121 coordinates ATP.

Belongs to the MurCDEF family.

The protein resides in the cytoplasm. It carries out the reaction UDP-N-acetyl-alpha-D-muramoyl-L-alanine + D-glutamate + ATP = UDP-N-acetyl-alpha-D-muramoyl-L-alanyl-D-glutamate + ADP + phosphate + H(+). The protein operates within cell wall biogenesis; peptidoglycan biosynthesis. Its function is as follows. Cell wall formation. Catalyzes the addition of glutamate to the nucleotide precursor UDP-N-acetylmuramoyl-L-alanine (UMA). In Koribacter versatilis (strain Ellin345), this protein is UDP-N-acetylmuramoylalanine--D-glutamate ligase.